Here is a 178-residue protein sequence, read N- to C-terminus: Large ribosomal subunit protein uL6 (178 aa).

This sequence belongs to the universal ribosomal protein uL6 family. In terms of assembly, part of the 50S ribosomal subunit.

This protein binds to the 23S rRNA, and is important in its secondary structure. It is located near the subunit interface in the base of the L7/L12 stalk, and near the tRNA binding site of the peptidyltransferase center. The polypeptide is Large ribosomal subunit protein uL6 (Tropheryma whipplei (strain TW08/27) (Whipple's bacillus)).